The chain runs to 79 residues: HAASPRGRPQQRSSRHGAEGPDTTRRGSCCSSSSSCCRPSTPRHPHNHECKRQLLLLGALLGLPSNTMKYVLVQKKKKK.

A compositionally biased stretch (low complexity) spans 1–12 (HAASPRGRPQQR). The disordered stretch occupies residues 1-47 (HAASPRGRPQQRSSRHGAEGPDTTRRGSCCSSSSSCCRPSTPRHPHN). Basic and acidic residues predominate over residues 16–25 (HGAEGPDTTR). The segment covering 28-37 (SCCSSSSSCC) has biased composition (low complexity).

It localises to the membrane. It is found in the cell membrane. Its subcellular location is the cytoplasmic vesicle. The protein resides in the secretory vesicle. The protein localises to the rhoptry. This Eimeria acervulina (Coccidian parasite) protein is EAMZP30-47 protein (CMC17).